Consider the following 351-residue polypeptide: Ribosomal RNA large subunit methyltransferase M (351 aa).

S-adenosyl-L-methionine is bound by residues serine 186, 219-222 (APGG), aspartate 238, aspartate 258, and aspartate 274. Lysine 303 (proton acceptor) is an active-site residue.

It belongs to the class I-like SAM-binding methyltransferase superfamily. RNA methyltransferase RlmE family. RlmM subfamily. As to quaternary structure, monomer.

The protein localises to the cytoplasm. It catalyses the reaction cytidine(2498) in 23S rRNA + S-adenosyl-L-methionine = 2'-O-methylcytidine(2498) in 23S rRNA + S-adenosyl-L-homocysteine + H(+). Functionally, catalyzes the 2'-O-methylation at nucleotide C2498 in 23S rRNA. The sequence is that of Ribosomal RNA large subunit methyltransferase M from Xylella fastidiosa (strain 9a5c).